The primary structure comprises 469 residues: MITEGAQAPRLLLPPLLLLLTLPATGSDPVLCFTQYEESSGKCKGLLGGGVSVEDCCLNTAFAYQKRSGGLCQPCRSPRWSLWSTWAPCSVTCSEGSQLRYRRCVGWNGQCSGKVAPGTLEWQLQACEDQQCCPEMGGWSGWGPWEPCSVTCSKGTRTRRRACNHPAPKCGGHCPGQAQESEACDTQQVCPTHGAWATWGPWTPCSASCHGGPHEPKETRSRKCSAPEPSQKPPGKPCPGLAYEQRRCTGLPPCPVAGGWGPWGPVSPCPVTCGLGQTMEQRTCNHPVPQHGGPFCAGDATRTHICNTAVPCPVDGEWDSWGEWSPCIRRNMKSISCQEIPGQQSRGRTCRGRKFDGHRCAGQQQDIRHCYSIQHCPLKGSWSEWSTWGLCMPPCGPNPTRARQRLCTPLLPKYPPTVSMVEGQGEKNVTFWGRPLPRCEELQGQKLVVEEKRPCLHVPACKDPEEEEL.

A signal peptide spans 1 to 27; it reads MITEGAQAPRLLLPPLLLLLTLPATGS. TSP type-1 domains follow at residues 28 to 76, 77 to 134, 136 to 191, 193 to 255, 257 to 313, 315 to 377, and 379 to 462; these read DPVL…QPCR, SPRW…QCCP, MGGW…QVCP, HGAW…PPCP, AGGW…VPCP, DGEW…QHCP, and KGSW…PACK. 3 disulfides stabilise this stretch: Cys-32-Cys-56, Cys-43-Cys-72, and Cys-57-Cys-75. Residues Trp-83 and Trp-86 are each glycosylated (C-linked (Man) tryptophan). Cystine bridges form between Cys-89/Cys-127, Cys-93/Cys-133, Cys-104/Cys-111, Cys-132/Cys-170, Cys-148/Cys-184, Cys-152/Cys-190, and Cys-163/Cys-174. Thr-92 carries an O-linked (Fuc...) threonine glycan. C-linked (Man) tryptophan glycosylation is found at Trp-139, Trp-142, and Trp-145. The O-linked (Fuc...) threonine glycan is linked to Thr-151. 3 C-linked (Man) tryptophan glycosylation sites follow: Trp-196, Trp-199, and Trp-202. Intrachain disulfides connect Cys-205–Cys-248, Cys-209–Cys-254, and Cys-224–Cys-238. O-linked (Fuc...) serine glycosylation occurs at Ser-208. The disordered stretch occupies residues 219 to 238; sequence TRSRKCSAPEPSQKPPGKPC. Trp-260 and Trp-263 each carry a C-linked (Man) tryptophan glycan. 3 disulfide bridges follow: Cys-269–Cys-306, Cys-273–Cys-312, and Cys-284–Cys-296. Thr-272 is a glycosylation site (O-linked (Fuc...) threonine). Trp-321 and Trp-324 each carry a C-linked (Man) tryptophan glycan. 3 cysteine pairs are disulfide-bonded: Cys-327–Cys-370, Cys-337–Cys-376, and Cys-350–Cys-360. Residues 351-359 are interaction with Complement C3 beta chain; sequence RGRKFDGHR. C-linked (Man) tryptophan glycans are attached at residues Trp-382, Trp-385, and Trp-388. 3 disulfides stabilise this stretch: Cys-391–Cys-455, Cys-395–Cys-461, and Cys-407–Cys-439. The N-linked (GlcNAc...) (complex) asparagine glycan is linked to Asn-428.

In plasma, properdin exists as dimers, trimers or tetramers in the relative proportions of 26:54:20. Interacts with the pro-C3-convertase enzyme complex (C3b-Bb) comprised of Complement C3 beta chain (C3b) and the Complement factor B Bb fragment (Bb), where it binds (via its TSP type-1 5 domain) with C3b and Bb. This interaction stabilizes the complex and allows it to become the active C3-convertase enzyme complex (C3b-Bb-FP). Interacts with C3b. Interacts with CFB.

The protein localises to the secreted. Its function is as follows. A positive regulator of the alternate pathway (AP) of complement. It binds to and stabilizes the C3- and C5-convertase enzyme complexes. Inhibits CFI-CFH mediated degradation of Complement C3 beta chain (C3b). This Homo sapiens (Human) protein is Properdin.